The chain runs to 166 residues: Ribosome maturation factor RimM (166 aa).

One can recognise a PRC barrel domain in the interval 90-165 (NDNDAFSIFY…IITLKNIEGL (76 aa)).

Belongs to the RimM family. Binds ribosomal protein uS19.

It localises to the cytoplasm. An accessory protein needed during the final step in the assembly of 30S ribosomal subunit, possibly for assembly of the head region. Essential for efficient processing of 16S rRNA. May be needed both before and after RbfA during the maturation of 16S rRNA. It has affinity for free ribosomal 30S subunits but not for 70S ribosomes. The chain is Ribosome maturation factor RimM from Mesoplasma florum (strain ATCC 33453 / NBRC 100688 / NCTC 11704 / L1) (Acholeplasma florum).